The sequence spans 77 residues: Small ribosomal subunit protein bS18 (77 aa).

It belongs to the bacterial ribosomal protein bS18 family. Part of the 30S ribosomal subunit. Forms a tight heterodimer with protein bS6.

In terms of biological role, binds as a heterodimer with protein bS6 to the central domain of the 16S rRNA, where it helps stabilize the platform of the 30S subunit. This Lactobacillus helveticus (strain DPC 4571) protein is Small ribosomal subunit protein bS18.